Here is a 361-residue protein sequence, read N- to C-terminus: tRNA(Ile)-lysidine synthase (361 aa).

Residue 32–37 (SGGPDS) participates in ATP binding.

Belongs to the tRNA(Ile)-lysidine synthase family.

It is found in the cytoplasm. It catalyses the reaction cytidine(34) in tRNA(Ile2) + L-lysine + ATP = lysidine(34) in tRNA(Ile2) + AMP + diphosphate + H(+). Ligates lysine onto the cytidine present at position 34 of the AUA codon-specific tRNA(Ile) that contains the anticodon CAU, in an ATP-dependent manner. Cytidine is converted to lysidine, thus changing the amino acid specificity of the tRNA from methionine to isoleucine. This is tRNA(Ile)-lysidine synthase from Bradyrhizobium diazoefficiens (strain JCM 10833 / BCRC 13528 / IAM 13628 / NBRC 14792 / USDA 110).